Consider the following 118-residue polypeptide: Small ribosomal subunit protein uS13 (118 aa).

Residues 95 to 118 (LPLRGQRTRTNARTRKGPRKAIKK) are disordered.

It belongs to the universal ribosomal protein uS13 family. Part of the 30S ribosomal subunit. Forms a loose heterodimer with protein S19. Forms two bridges to the 50S subunit in the 70S ribosome.

Located at the top of the head of the 30S subunit, it contacts several helices of the 16S rRNA. In the 70S ribosome it contacts the 23S rRNA (bridge B1a) and protein L5 of the 50S subunit (bridge B1b), connecting the 2 subunits; these bridges are implicated in subunit movement. Contacts the tRNAs in the A and P-sites. The chain is Small ribosomal subunit protein uS13 from Xylella fastidiosa (strain 9a5c).